The sequence spans 492 residues: 6-phosphogluconate dehydrogenase, decarboxylating 2 (492 aa).

Residues 12-17 (GLAVMG), 35-37 (NRT), 77-79 (IKA), and N105 contribute to the NADP(+) site. Residues N105 and 131 to 133 (SGG) each bind substrate. K185 functions as the Proton acceptor in the catalytic mechanism. 188–189 (HN) is a substrate binding site. E192 acts as the Proton donor in catalysis. Y193, K262, R289, R449, and H455 together coordinate substrate.

It belongs to the 6-phosphogluconate dehydrogenase family. Homodimer.

The catalysed reaction is 6-phospho-D-gluconate + NADP(+) = D-ribulose 5-phosphate + CO2 + NADPH. The protein operates within carbohydrate degradation; pentose phosphate pathway; D-ribulose 5-phosphate from D-glucose 6-phosphate (oxidative stage): step 3/3. Catalyzes the oxidative decarboxylation of 6-phosphogluconate to ribulose 5-phosphate and CO(2), with concomitant reduction of NADP to NADPH. This Saccharomyces cerevisiae (strain ATCC 204508 / S288c) (Baker's yeast) protein is 6-phosphogluconate dehydrogenase, decarboxylating 2 (GND2).